The sequence spans 330 residues: Aspartate--ammonia ligase (330 aa).

It belongs to the class-II aminoacyl-tRNA synthetase family. AsnA subfamily.

The protein localises to the cytoplasm. It catalyses the reaction L-aspartate + NH4(+) + ATP = L-asparagine + AMP + diphosphate + H(+). It participates in amino-acid biosynthesis; L-asparagine biosynthesis; L-asparagine from L-aspartate (ammonia route): step 1/1. The polypeptide is Aspartate--ammonia ligase (Streptococcus thermophilus (strain CNRZ 1066)).